Consider the following 166-residue polypeptide: Crossover junction endodeoxyribonuclease RuvC (166 aa).

Active-site residues include Asp-11, Glu-70, and Asp-142. Residues Asp-11, Glu-70, and Asp-142 each contribute to the Mg(2+) site.

Belongs to the RuvC family. As to quaternary structure, homodimer which binds Holliday junction (HJ) DNA. The HJ becomes 2-fold symmetrical on binding to RuvC with unstacked arms; it has a different conformation from HJ DNA in complex with RuvA. In the full resolvosome a probable DNA-RuvA(4)-RuvB(12)-RuvC(2) complex forms which resolves the HJ. Mg(2+) is required as a cofactor.

It is found in the cytoplasm. It catalyses the reaction Endonucleolytic cleavage at a junction such as a reciprocal single-stranded crossover between two homologous DNA duplexes (Holliday junction).. Its function is as follows. The RuvA-RuvB-RuvC complex processes Holliday junction (HJ) DNA during genetic recombination and DNA repair. Endonuclease that resolves HJ intermediates. Cleaves cruciform DNA by making single-stranded nicks across the HJ at symmetrical positions within the homologous arms, yielding a 5'-phosphate and a 3'-hydroxyl group; requires a central core of homology in the junction. The consensus cleavage sequence is 5'-(A/T)TT(C/G)-3'. Cleavage occurs on the 3'-side of the TT dinucleotide at the point of strand exchange. HJ branch migration catalyzed by RuvA-RuvB allows RuvC to scan DNA until it finds its consensus sequence, where it cleaves and resolves the cruciform DNA. In Nitratidesulfovibrio vulgaris (strain DP4) (Desulfovibrio vulgaris), this protein is Crossover junction endodeoxyribonuclease RuvC.